We begin with the raw amino-acid sequence, 1485 residues long: Putative E3 ubiquitin-protein ligase LIN-1 (1485 aa).

The span at 337-353 (EENEDDSDSELENESVD) shows a compositional bias: acidic residues. 2 disordered regions span residues 337–363 (EENEDDSDSELENESVDSDDKNNIFSP) and 384–417 (NQIPSPDIFSPLDSPRTAPNNSSPNPDMHSKRDS). One can recognise a U-box domain in the interval 510–585 (KPPKDFVCPI…TSWKEQNPEL (76 aa)). WD repeat units follow at residues 1204–1241 (SSNGEVLSMVYLNGQVLSGHTDGTIKVWDARKRIPRVI), 1246–1283 (EHTKAVTSLCSSGDRLYSGSLDKTIRVWTIKSDGIKCI), 1409–1448 (SLSTGLDIHRIAINSDFIFAGTKFGTIEVWLKDKFTRVAS), and 1454–1485 (GHTKITSLVSDVDGMMLFVGSSDGKIQVWALD).

Expressed in roots and nodules, and at very low levels in calli and seedling shoots.

The catalysed reaction is S-ubiquitinyl-[E2 ubiquitin-conjugating enzyme]-L-cysteine + [acceptor protein]-L-lysine = [E2 ubiquitin-conjugating enzyme]-L-cysteine + N(6)-ubiquitinyl-[acceptor protein]-L-lysine.. Its pathway is protein modification; protein ubiquitination. Functionally, putative E3 ubiquitin-protein ligase involved in the rhizobial infection process. Plays an important role in the early steps of infection thread formation and in growth and differentiation of nodules. This is Putative E3 ubiquitin-protein ligase LIN-1 from Lotus japonicus (Lotus corniculatus var. japonicus).